The chain runs to 102 residues: N(4)-acetylcytidine amidohydrolase (102 aa).

The 87-residue stretch at 6–92 (TFFGRFEADI…VIKAIYPGLD (87 aa)) folds into the ASCH domain. The active-site Proton acceptor is the Lys-20. Thr-23 (nucleophile) is an active-site residue. Glu-73 serves as the catalytic Proton donor.

This sequence belongs to the N(4)-acetylcytidine amidohydrolase family.

It catalyses the reaction N(4)-acetylcytidine + H2O = cytidine + acetate + H(+). It carries out the reaction N(4)-acetyl-2'-deoxycytidine + H2O = 2'-deoxycytidine + acetate + H(+). The enzyme catalyses N(4)-acetylcytosine + H2O = cytosine + acetate + H(+). Its function is as follows. Catalyzes the hydrolysis of N(4)-acetylcytidine (ac4C). The sequence is that of N(4)-acetylcytidine amidohydrolase from Yersinia pseudotuberculosis serotype O:1b (strain IP 31758).